A 224-amino-acid chain; its full sequence is Cutinase 1 (224 aa).

A signal peptide spans 1-16 (MKFLSVLSLAITLAAA). Residues Cys-46 and Cys-125 are joined by a disulfide bond. The active-site Nucleophile is the Ser-136. Cysteines 187 and 194 form a disulfide. The active site involves Asp-191. Catalysis depends on His-204, which acts as the Proton donor/acceptor.

It belongs to the cutinase family. Post-translationally, the 2 disulfide bonds play a critical role in holding the catalytic residues in juxta-position; reduction of the disulfide bridges results in the complete inactivation of the enzyme. In terms of processing, the N-terminus is blocked.

It localises to the secreted. The enzyme catalyses cutin + H2O = cutin monomers.. Inhibited by diisopropyl fluorophosphate (DFP). In terms of biological role, catalyzes the hydrolysis of complex carboxylic polyesters found in the cell wall of plants. Degrades cutin, a macromolecule that forms the structure of the plant cuticle. Allows pathogenic fungi to penetrate through the cuticular barrier into the host plant during the initial stage of fungal infection. The chain is Cutinase 1 (CUTA) from Colletotrichum gloeosporioides (Anthracnose fungus).